The chain runs to 1114 residues: M-phase phosphoprotein 9 (1114 aa).

Disordered regions lie at residues 1-55 (MEDF…KTGP), 106-161 (RPSC…DCHV), 183-207 (AKEPTEPLEPGAASQGQHPASVVQA), 267-301 (TSWAQRLKQNQSKQAHTEDDCSGPKPGSELNWKPP), and 410-468 (VLEP…STIP). Over residues 24–51 (APQSLGLSLHANRSSPHLSTNGVSSFSG) the composition is skewed to polar residues. Over residues 106–119 (RPSCSSSSVSEQVS) the composition is skewed to low complexity. Residues 149–161 (QPASSTSYPDCHV) show a composition bias toward polar residues. 2 stretches are compositionally biased toward polar residues: residues 267 to 280 (TSWAQRLKQNQSKQ) and 429 to 446 (HNPSQVSGFSKYPSTTRA). The tract at residues 368 to 729 (LSQVLTLDPG…EAQVKQAEHE (362 aa)) is required for its centrosomal localization. The interaction with CEP97 stretch occupies residues 382–431 (KPKEHVAGIQAHGFLHALDDRISFSPDSVLEPSLSRHSDTDSSSQASHNP). Residues 574–733 (DRCGQLDSAL…KQAEHESMLS (160 aa)) adopt a coiled-coil conformation. Ser-710 is subject to Phosphoserine; by TTBK2. Lys-713 is covalently cross-linked (Glycyl lysine isopeptide (Lys-Gly) (interchain with G-Cter in ubiquitin)). Position 717 is a phosphoserine; by TTBK2 (Ser-717). Disordered regions lie at residues 727-755 (EHESMLSLRNGAKVPERPSRSNSVATSDV), 840-931 (SWGT…GFSH), and 975-1002 (EEKKYSEKNSDDPVNPSSCPEHSPNGLK). Residues 730 to 963 (SMLSLRNGAK…PVSTLQQTTA (234 aa)) form an interaction with KIF24 region. The span at 852 to 868 (SKLVNSRQTEPSVNTGR) shows a compositional bias: polar residues. Residues 881 to 898 (QTSASQRSSSLPPSSRKA) show a composition bias toward low complexity. Ser-926 is modified (phosphoserine). Residues 975-985 (EEKKYSEKNSD) are compositionally biased toward basic and acidic residues. A coiled-coil region spans residues 1040 to 1105 (RTLAETERFF…GSVRMTLKKF (66 aa)).

As to quaternary structure, interacts with CCP110, CEP97 and KIF24. Post-translationally, TTBK2-mediated phosphorylation at Ser-710 and Ser-717, promotes its ubiquitination at Lys-713 leading to proteasomal degradation, loss of MPHOSPH9 facilitates the removal of the CP110-CEP97 complex from the mother centrioles, promoting the initiation of ciliogenesis. Phosphorylated in M (mitotic) phase. Ubiquitinated at Lys-713, leading to proteasomal degradation.

The protein localises to the cytoplasm. The protein resides in the cytoskeleton. It is found in the microtubule organizing center. It localises to the centrosome. Its subcellular location is the centriole. The protein localises to the golgi apparatus membrane. Functionally, negatively regulates cilia formation by recruiting the CP110-CEP97 complex (a negative regulator of ciliogenesis) at the distal end of the mother centriole in ciliary cells. At the beginning of cilia formation, MPHOSPH9 undergoes TTBK2-mediated phosphorylation and degradation via the ubiquitin-proteasome system and removes itself and the CP110-CEP97 complex from the distal end of the mother centriole, which subsequently promotes cilia formation. This chain is M-phase phosphoprotein 9 (Mphosph9), found in Mus musculus (Mouse).